The chain runs to 101 residues: Cysteine-rich and transmembrane domain-containing protein B (101 aa).

Residues 1-80 (MSQQPPAVGV…PQQQQQQKHS (80 aa)) are disordered. Pro residues predominate over residues 24 to 43 (DAYPPPGQPYPQQGYPPPQG). A compositionally biased stretch (low complexity) spans 59–77 (YPEQGYPQQGYPPQQQQQQ). Residues 78-95 (KHSPGMLEGCIAALCCYC) traverse the membrane as a helical segment.

The protein belongs to the CYSTM1 family.

The protein resides in the membrane. The polypeptide is Cysteine-rich and transmembrane domain-containing protein B (Arabidopsis thaliana (Mouse-ear cress)).